Consider the following 185-residue polypeptide: Large ribosomal subunit protein uL5 (185 aa).

This sequence belongs to the universal ribosomal protein uL5 family. In terms of assembly, part of the 50S ribosomal subunit; part of the 5S rRNA/L5/L18/L25 subcomplex. Contacts the 5S rRNA and the P site tRNA. Forms a bridge to the 30S subunit in the 70S ribosome.

Its function is as follows. This is one of the proteins that bind and probably mediate the attachment of the 5S RNA into the large ribosomal subunit, where it forms part of the central protuberance. In the 70S ribosome it contacts protein S13 of the 30S subunit (bridge B1b), connecting the 2 subunits; this bridge is implicated in subunit movement. Contacts the P site tRNA; the 5S rRNA and some of its associated proteins might help stabilize positioning of ribosome-bound tRNAs. This Rhizobium johnstonii (strain DSM 114642 / LMG 32736 / 3841) (Rhizobium leguminosarum bv. viciae) protein is Large ribosomal subunit protein uL5.